The chain runs to 158 residues: NAD(P)H-quinone oxidoreductase subunit J, chloroplastic (158 aa).

The protein belongs to the complex I 30 kDa subunit family. In terms of assembly, NDH is composed of at least 16 different subunits, 5 of which are encoded in the nucleus.

The protein resides in the plastid. Its subcellular location is the chloroplast thylakoid membrane. The enzyme catalyses a plastoquinone + NADH + (n+1) H(+)(in) = a plastoquinol + NAD(+) + n H(+)(out). The catalysed reaction is a plastoquinone + NADPH + (n+1) H(+)(in) = a plastoquinol + NADP(+) + n H(+)(out). NDH shuttles electrons from NAD(P)H:plastoquinone, via FMN and iron-sulfur (Fe-S) centers, to quinones in the photosynthetic chain and possibly in a chloroplast respiratory chain. The immediate electron acceptor for the enzyme in this species is believed to be plastoquinone. Couples the redox reaction to proton translocation, and thus conserves the redox energy in a proton gradient. This chain is NAD(P)H-quinone oxidoreductase subunit J, chloroplastic, found in Nuphar advena (Common spatterdock).